The sequence spans 179 residues: MRFVMPGDRIGSAEEYVKGEGVYEEGGELFAAVAGKLIIKDRVAKVESISPIPEIVKGDVVLGRVVDLRNSIALIEVSSKKGENRGPSNRGIGILHVSNVDEGYVKEISEAVGYLDILKARVIGDNLRLSTKEEEMGVLRALCSNCKTEMVREGDILKCPECGRVEKRKISTDYGKGEW.

One can recognise an S1 motif domain in the interval 58–137; it reads GDVVLGRVVD…RLSTKEEEMG (80 aa). Positions 143, 146, 159, and 162 each coordinate Zn(2+).

The protein belongs to the CSL4 family. As to quaternary structure, component of the archaeal exosome complex. Forms a trimer of Rrp4 and/or Csl4 subunits. The trimer associates with a hexameric ring-like arrangement composed of 3 Rrp41-Rrp42 heterodimers. Interacts with DnaG.

It localises to the cytoplasm. Non-catalytic component of the exosome, which is a complex involved in RNA degradation. Increases the RNA binding and the efficiency of RNA degradation. Helpful for the interaction of the exosome with A-poor RNAs. The protein is Exosome complex component Csl4 of Archaeoglobus fulgidus (strain ATCC 49558 / DSM 4304 / JCM 9628 / NBRC 100126 / VC-16).